A 182-amino-acid chain; its full sequence is ATP-dependent protease subunit HslV (182 aa).

Threonine 2 is a catalytic residue. Residues glycine 157, cysteine 160, and threonine 163 each coordinate Na(+).

The protein belongs to the peptidase T1B family. HslV subfamily. As to quaternary structure, a double ring-shaped homohexamer of HslV is capped on each side by a ring-shaped HslU homohexamer. The assembly of the HslU/HslV complex is dependent on binding of ATP.

Its subcellular location is the cytoplasm. It carries out the reaction ATP-dependent cleavage of peptide bonds with broad specificity.. Allosterically activated by HslU binding. Protease subunit of a proteasome-like degradation complex believed to be a general protein degrading machinery. This is ATP-dependent protease subunit HslV from Vibrio atlanticus (strain LGP32) (Vibrio splendidus (strain Mel32)).